We begin with the raw amino-acid sequence, 509 residues long: ATP synthase subunit alpha (509 aa).

171–178 (GDRKTGKT) provides a ligand contact to ATP.

The protein belongs to the ATPase alpha/beta chains family. F-type ATPases have 2 components, CF(1) - the catalytic core - and CF(0) - the membrane proton channel. CF(1) has five subunits: alpha(3), beta(3), gamma(1), delta(1), epsilon(1). CF(0) has three main subunits: a(1), b(2) and c(9-12). The alpha and beta chains form an alternating ring which encloses part of the gamma chain. CF(1) is attached to CF(0) by a central stalk formed by the gamma and epsilon chains, while a peripheral stalk is formed by the delta and b chains.

It localises to the cell inner membrane. It catalyses the reaction ATP + H2O + 4 H(+)(in) = ADP + phosphate + 5 H(+)(out). Produces ATP from ADP in the presence of a proton gradient across the membrane. The alpha chain is a regulatory subunit. The protein is ATP synthase subunit alpha of Ehrlichia canis (strain Jake).